Here is a 720-residue protein sequence, read N- to C-terminus: Photosystem I P700 chlorophyll a apoprotein A1 (720 aa).

A run of 8 helical transmembrane segments spans residues 61–84 (VFSA…FHGA), 147–170 (LYCT…FHYH), 186–210 (LNHH…HVSL), 282–300 (TAHH…GHMY), 337–360 (WHAQ…HHMY), 376–402 (LSLF…IFMV), 424–446 (AIVS…LYIH), and 522–540 (FLVH…LILL). 2 residues coordinate [4Fe-4S] cluster: Cys-564 and Cys-573. Helical transmembrane passes span 580–601 (HVFL…HFSW) and 655–677 (LSAY…MFLF). His-666 lines the chlorophyll a' pocket. Chlorophyll a contacts are provided by Met-674 and Tyr-682. Trp-683 contacts phylloquinone. The helical transmembrane segment at 715–720 (AVGVAH) threads the bilayer.

Belongs to the PsaA/PsaB family. In terms of assembly, the PsaA/B heterodimer binds the P700 chlorophyll special pair and subsequent electron acceptors. PSI consists of a core antenna complex that captures photons, and an electron transfer chain that converts photonic excitation into a charge separation. The eukaryotic PSI reaction center is composed of at least 11 subunits. The cofactor is P700 is a chlorophyll a/chlorophyll a' dimer, A0 is one or more chlorophyll a, A1 is one or both phylloquinones and FX is a shared 4Fe-4S iron-sulfur center..

It is found in the plastid. Its subcellular location is the chloroplast thylakoid membrane. The catalysed reaction is reduced [plastocyanin] + hnu + oxidized [2Fe-2S]-[ferredoxin] = oxidized [plastocyanin] + reduced [2Fe-2S]-[ferredoxin]. Functionally, psaA and PsaB bind P700, the primary electron donor of photosystem I (PSI), as well as the electron acceptors A0, A1 and FX. PSI is a plastocyanin-ferredoxin oxidoreductase, converting photonic excitation into a charge separation, which transfers an electron from the donor P700 chlorophyll pair to the spectroscopically characterized acceptors A0, A1, FX, FA and FB in turn. Oxidized P700 is reduced on the lumenal side of the thylakoid membrane by plastocyanin. The polypeptide is Photosystem I P700 chlorophyll a apoprotein A1 (Sequoia sempervirens (California redwood)).